We begin with the raw amino-acid sequence, 5202 residues long: MNCPVLSLGSGFLFQVIEMLIFAYFASISLTESRGLFPRLENVGAFKKVSIVPTQAVCGLPDRSTFCHSSAAAESIQFCTQRFCIQDCPYRSSHPTYTALFSAGLSSCITPDKNDLHPNAHSNSASFIFGNHKSCFSSPPSPKLMASFTLAVWLKPEQQGVMCVIEKTVDGQIVFKLTISEKETMFYYRTVNGLQPPIKVMTLGRILVKKWIHLSVQVHQTKISFFINGVEKDHTPFNARTLSGSITDFASGTVQIGQSLNGLEQFVGRMQDFRLYQVALTNREILEVFSGDLLRLHAQSHCRCPGSHPRVHPLAQRYCIPNDAGDTADNRVSRLNPEAHPLSFVNDNDVGTSWVSNVFTNITQLNQGVTISVDLENGQYQVFYIIIQFFSPQPTEIRIQRKKENSLDWEDWQYFARNCGAFGMKNNGDLEKPDSVNCLQLSNFTPYSRGNVTFSILTPGPNYRPGYNNFYNTPSLQEFVKATQIRFHFHGQYYTTETAVNLRHRYYAVDEITISGRCQCHGHADNCDTTSQPYRCLCSQESFTEGLHCDRCLPLYNDKPFRQGDQVYAFNCKPCQCNSHSKSCHYNISVDPFPFEHFRGGGGVCDDCEHNTTGRNCELCKDYFFRQVGADPSAIDVCKPCDCDTVGTRNGSILCDQIGGQCNCKRHVSGRQCNQCQNGFYNLQELDPDGCSPCNCNTSGTVDGDITCHQNSGQCKCKANVIGLRCDHCNFGFKFLRSFNDVGCEPCQCNLHGSVNKFCNPHSGQCECKKEAKGLQCDTCRENFYGLDVTNCKACDCDTAGSLPGTVCNAKTGQCICKPNVEGRQCNKCLEGNFYLRQNNSFLCLPCNCDKTGTINGSLLCNKSTGQCPCKLGVTGLRCNQCEPHRYNLTIDNFQHCQMCECDSLGTLPGTICDPISGQCLCVPNRQGRRCNQCQPGFYISPGNATGCLPCSCHTTGAVNHICNSLTGQCVCQDASIAGQRCDQCKDHYFGFDPQTGRCQPCNCHLSGALNETCHLVTGQCFCKQFVTGSKCDACVPSASHLDVNNLLGCSKTPFQQPPPRGQVQSSSAINLSWSPPDSPNAHWLTYSLLRDGFEIYTTEDQYPYSIQYFLDTDLLPYTKYSYYIETTNVHGSTRSVAVTYKTKPGVPEGNLTLSYIIPIGSDSVTLTWTTLSNQSGPIEKYILSCAPLAGGQPCVSYEGHETSATIWNLVPFAKYDFSVQACTSGGCLHSLPITVTTAQAPPQRLSPPKMQKISSTELHVEWSPPAELNGIIIRYELYMRRLRSTKETTSEESRVFQSSGWLSPHSFVESANENALKPPQTMTTITGLEPYTKYEFRVLAVNMAGSVSSAWVSERTGESAPVFMIPPSVFPLSSYSLNISWEKPADNVTRGKVVGYDINMLSEQSPQQSIPMAFSQLLHTAKSQELSYTVEGLKPYRIYEFTITLCNSVGCVTSASGAGQTLAAAPAQLRPPLVKGINSTTIHLRWFPPEELNGPSPIYQLERRESSLPALMTTMMKGIRFIGNGYCKFPSSTHPVNTDFTGIKASFRTKVPEGLIVFAASPGNQEEYFALQLKKGRLYFLFDPQGSPVEVTTTNDHGKQYSDGKWHEIIAIRHQAFGQITLDGIYTGSSAILNGSTVIGDNTGVFLGGLPRSYTILRKDPEIIQKGFVGCLKDVHFMKNYNPSAIWEPLDWQSSEEQINVYNSWEGCPASLNEGAQFLGAGFLELHPYMFHGGMNFEISFKFRTDQLNGLLLFVYNKDGPDFLAMELKSGILTFRLNTSLAFTQVDLLLGLSYCNGKWNKVIIKKEGSFISASVNGLMKHASESGDQPLVVNSPVYVGGIPQELLNSYQHLCLEQGFGGCMKDVKFTRGAVVNLASVSSGAVRVNLDGCLSTDSAVNCRGNDSILVYQGKEQSVYEGGLQPFTEYLYRVIASHEGGSVYSDWSRGRTTGAAPQSVPTPSRVRSLNGYSIEVTWDEPVVRGVIEKYILKAYSEDSTRPPRMPSASAEFVNTSNLTGILTGLLPFKNYAVTLTACTLAGCTESSHALNISTPQEAPQEVQPPVAKSLPSSLLLSWNPPKKANGIITQYCLYMDGRLIYSGSEENYIVTDLAVFTPHQFLLSACTHVGCTNSSWVLLYTAQLPPEHVDSPVLTVLDSRTIHIQWKQPRKISGILERYVLYMSNHTHDFTIWSVIYNSTELFQDHMLQYVLPGNKYLIKLGACTGGGCTVSEASEALTDEDIPEGVPAPKAHSYSPDSFNVSWTEPEYPNGVITSYGLYLDGILIHNSSELSYRAYGFAPWSLHSFRVQACTAKGCALGPLVENRTLEAPPEGTVNVFVKTQGSRKAHVRWEAPFRPNGLLTHSVLFTGIFYVDPVGNNYTLLNVTKVMYSGEETNLWVLIDGLVPFTNYTVQVNISNSQGSLITDPITIAMPPGAPDGVLPPRLSSATPTSLQVVWSTPARNNAPGSPRYQLQMRSGDSTHGFLELFSNPSASLSYEVSDLQPYTEYMFRLVASNGFGSAHSSWIPFMTAEDKPGPVVPPILLDVKSRMMLVTWQHPRKSNGVITHYNIYLHGRLYLRTPGNVTNCTVMHLHPYTAYKFQVEACTSKGCSLSPESQTVWTLPGAPEGIPSPELFSDTPTSVIISWQPPTHPNGLVENFTIERRVKGKEEVTTLVTLPRSHSMRFIDKTSALSPWTKYEYRVLMSTLHGGTNSSAWVEVTTRPSRPAGVQPPVVTVLEPDAVQVTWKPPLIQNGDILSYEIHMPDPHITLTNVTSAVLSQKVTHLIPFTNYSVTIVACSGGNGYLGGCTESLPTYVTTHPTVPQNVGPLSVIPLSESYVVISWQPPSKPNGPNLRYELLRRKIQQPLASNPPEDLNRWHNIYSGTQWLYEDKGLSRFTTYEYMLFVHNSVGFTPSREVTVTTLAGLPERGANLTASVLNHTAIDVRWAKPTVQDLQGEVEYYTLFWSSATSNDSLKILPDVNSHVIGHLKPNTEYWIFISVFNGVHSINSAGLHATTCDGEPQGMLPPEVVIINSTAVRVIWTSPSNPNGVVTEYSIYVNNKLYKTGMNVPGSFILRDLSPFTIYDIQVEVCTIYACVKSNGTQITTVEDTPSDIPTPTIRGITSRSLQIDWVSPRKPNGIILGYDLLWKTWYPCAKTQKLVQDQSDELCKAVRCQKPESICGHICYSSEAKVCCNGVLYNPKPGHRCCEEKYIPFVLNSTGVCCGGRIQEAQPNHQCCSGYYARILPGEVCCPDEQHNRVSVGIGDSCCGRMPYSTSGNQICCAGRLHDGHGQKCCGRQIVSNDLECCGGEEGVVYNRLPGMFCCGQDYVNMSDTICCSASSGESKAHIKKNDPVPVKCCETELIPKSQKCCNGVGYNPLKYVCSDKISTGMMMKETKECRILCPASMEATEHCGRCDFNFTSHICTVIRGSHNSTGKASIEEMCSSAEETIHTGSVNTYSYTDVNLKPYMTYEYRISAWNSYGRGLSKAVRARTKEDVPQGVSPPTWTKIDNLEDTIVLNWRKPIQSNGPIIYYILLRNGIERFRGTSLSFSDKEGIQPFQEYSYQLKACTVAGCATSSKVVAATTQGVPESILPPSITALSAVALHLSWSVPEKSNGVIKEYQIRQVGKGLIHTDTTDRRQHTVTGLQPYTNYSFTLTACTSAGCTSSEPFLGQTLQAAPEGVWVTPRHIIINSTTVELYWSLPEKPNGLVSQYQLSRNGNLLFLGGSEEQNFTDKNLEPNSRYTYKLEVKTGGGSSASDDYIVQTPMSTPEEIYPPYNITVIGPYSIFVAWIPPGILIPEIPVEYNVLLNDGSVTPLAFSVGHHQSTLLENLTPFTQYEIRIQACQNGSCGVSSRMFVKTPEAAPMDLNSPVLKALGSACIEIKWMPPEKPNGIIINYFIYRRPAGIEEESVLFVWSEGALEFMDEGDTLRPFTLYEYRVRACNSKGSVESLWSLTQTLEAPPQDFPAPWAQATSAHSVLLNWTKPESPNGIISHYRVVYQERPDDPTFNSPTVHAFTVKGTSHQAHLYGLEPFTTYRIGVVAANHAGEILSPWTLIQTLESSPSGLRNFIVEQKENGRALLLQWSEPMRTNGVIKTYNIFSDGFLEYSGLNRQFLFRRLDPFTLYTLTLEACTRAGCAHSAPQPLWTDEAPPDSQLAPTVHSVKSTSVELSWSEPVNPNGKIIRYEVIRRCFEGKAWGNQTIQADEKIVFTEYNTERNTFMYNDTGLQPWTQCEYKIYTWNSAGHTCSSWNVVRTLQAPPEGLSPPVISYVSMNPQKLLISWIPPEQSNGIIQSYRLQRNEMLYPFSFDPVTFNYTDEELLPFSTYSYALQACTSGGCSTSKPTSITTLEAAPSEVSPPDLWAVSATQMNVCWSPPTVQNGKITKYLVRYDNKESLAGQGLCLLVSHLQPYSQYNFSLVACTNGGCTASVSKSAWTMEALPENMDSPTLQVTGSESIEITWKPPRNPNGQIRSYELRRDGTIVYTGLETRYRDFTLTPGVEYSYTVTASNSQGGILSPLVKDRTSPSAPSGMEPPKLQARGPQEILVNWDPPVRTNGDIINYTLFIRELFERETKIIHINTTHNSFGMQSYIVNQLKPFHRYEIRIQACTTLGCASSDWTFIQTPEIAPLMQPPPHLEVQMAPGGFQPTVSLLWTGPLQPNGKVLYYELYRRQIATQPRKSNPVLIYNGSSTSFIDSELLPFTEYEYQVWAVNSAGKAPSSWTWCRTGPAPPEGLRAPTFHVISSTQAVVNISAPGKPNGIVSLYRLFSSSAHGAETVLSEGMATQQTLHGLQAFTNYSIGVEACTCFNCCSKGPTAELRTHPAPPSGLSSPQIGTLASRTASFRWSPPMFPNGVIHSYELQFHVACPPDSALPCTPSQIETKYTGLGQKASLGGLQPYTTYKLRVVAHNEVGSTASEWISFTTQKELPQYRAPFSVDSNLSVVCVNWSDTFLLNGQLKEYVLTDGGRRVYSGLDTTLYIPRTADKTFFFQVICTTDEGSVKTPLIQYDTSTGLGLVLTTPGKKKGSRSKSTEFYSELWFIVLMAMLGLILLAIFLSLILQRKIHKEPYIRERPPLVPLQKRMSPLNVYPPGENHMGLADTKIPRSGTPVSIRSNRSACVLRIPSQNQTSLTYSQGSLHRSVSQLMDIQDKKVLMDNSLWEAIMGHNSGLYVDEEDLMNAIKDFSSVTKERTTFTDTHL.

Residues M1–T31 form the signal peptide. The Extracellular segment spans residues E32 to W5042. A Laminin N-terminal domain is found at Q271–R517. N-linked (GlcNAc...) asparagine glycans are attached at residues N361 and N451. Disulfide bonds link C518–C527, C520–C536, C538–C549, C552–C572, C575–C584, C577–C605, C608–C617, C620–C638, C641–C655, C643–C662, C664–C673, C676–C691, C694–C708, C696–C715, C717–C726, C729–C744, C747–C759, C749–C766, C768–C777, C780–C792, C795–C808, C797–C815, C817–C826, C829–C844, C847–C861, C849–C868, C870–C879, C882–C897, C900–C913, C902–C920, C922–C931, C934–C948, C951–C963, C953–C970, C972–C982, C985–C999, C1002–C1014, C1004–C1021, C1023–C1032, and C1035–C1050. 10 consecutive Laminin EGF-like domains span residues C518–P574, C575–P640, C641–P693, C694–P746, C747–A794, C795–P846, C847–M899, C900–P950, C951–P1001, and C1002–K1052. N587 and N611 each carry an N-linked (GlcNAc...) asparagine glycan. A glycan (N-linked (GlcNAc...) asparagine) is linked at N650. N697 carries an N-linked (GlcNAc...) asparagine glycan. N-linked (GlcNAc...) asparagine glycans are attached at residues N839, N856, and N862. N888 is a glycosylation site (N-linked (GlcNAc...) asparagine). N944 carries N-linked (GlcNAc...) asparagine glycosylation. A glycan (N-linked (GlcNAc...) asparagine) is linked at N1011. 4 consecutive Fibronectin type-III domains span residues P1058–G1146, P1148–Q1244, R1245–V1363, and F1364–A1468. N1071, N1151, and N1174 each carry an N-linked (GlcNAc...) asparagine glycan. N-linked (GlcNAc...) asparagine glycosylation is found at N1379, N1388, N1479, and N1635. 2 consecutive Laminin G-like domains span residues M1517 to C1709 and N1714 to C1891. An intrachain disulfide couples C1672 to C1709. N-linked (GlcNAc...) asparagine glycosylation occurs at N1779. C1862 and C1891 are disulfide-bonded. Fibronectin type-III domains are found at residues T1869–Q1955, V1957–E2054, A2055–E2144, H2145–D2239, G2243–E2330, G2331–G2433, G2437–D2531, P2535–G2622, P2624–S2722, G2726–T2819, V2820–G2923, R2927–G3018, G3022–D3112, and I3113–E3209. 14 N-linked (GlcNAc...) asparagine glycosylation sites follow: N1903, N2011, N2014, N2048, N2130, N2182, N2195, N2258, N2285, N2322, N2377, N2382, N2407, and N2413. N-linked (GlcNAc...) asparagine glycans are attached at residues N2581, N2584, N2656, N2710, N2770, and N2788. N2930, N2937, N2970, N3032, and N3099 each carry an N-linked (GlcNAc...) asparagine glycan. 4 N-linked (GlcNAc...) asparagine glycosylation sites follow: N3217, N3330, N3419, and N3433. 2 disulfide bridges follow: C3371–C3444 and C3399–C3425. 16 consecutive Fibronectin type-III domains span residues C3403 to D3497, G3501 to V3589, S3592 to E3682, V3684 to S3770, E3774 to A3865, A3866 to A3963, P3964 to S4067, G4068 to A4153, S4157 to A4261, P4262 to S4357, E4358 to E4445, N4446 to S4530, G4534 to I4630, P4636 to A4733, P4734 to A4827, and P4828 to T4927. 5 N-linked (GlcNAc...) asparagine glycosylation sites follow: N3653, N3694, N3733, N3780, and N3849. N-linked (GlcNAc...) asparagine glycosylation occurs at N3984. N-linked (GlcNAc...) asparagine glycans are attached at residues N4202, N4226, N4317, and N4418. A disordered region spans residues I4518–Q4541. N-linked (GlcNAc...) asparagine glycans are attached at residues N4564, N4583, N4691, N4754, and N4800. N4943 and N4950 each carry an N-linked (GlcNAc...) asparagine glycan. The helical transmembrane segment at F5043–L5063 threads the bilayer. Residues Q5064 to L5202 lie on the Cytoplasmic side of the membrane. Positions T5200 to L5202 match the PDZ-binding motif.

Interacts with collagen IV and fibronectin via its laminin EGF-like domains. Interaction with collagen may be required for stable integration into the basement membrane. Interacts with NINL. Interacts with USH1C. Component of USH2 complex, composed of ADGRV1, PDZD7, USH2A and WHRN. Interacts with ADGRV1/MASS1 (via N-terminal PDZ domain). Interacts (via the cytoplasmic region) with WHRN. Interacts (via the cytoplasmic region) with PDZD7. Interacts (via the cytoplasmic region) with VEZT and MYO7A (via MyTH4-FERM domains); the interaction associates VEZT with the USH2 complex at the stereocilia base. In terms of tissue distribution, present in the basement membrane of many, but not all tissues. Expressed in retina, cochlea, small and large intestine, pancreas, bladder, prostate, esophagus, trachea, thymus, salivary glands, placenta, ovary, fallopian tube, uterus and testis. Absent in many other tissues such as heart, lung, liver, kidney and brain. In the retina, it is present in the basement membranes in the Bruch's layer choroid capillary basement membranes, where it localizes just beneath the retinal pigment epithelial cells (at protein level). Weakly expressed. Isoform 2 is expressed in fetal eye, cochlea and heart, and at very low level in brain, CNS, intestine, skeleton, tongue, kidney and lung. Isoform 2 is not expressed in stomach and liver. In adult tissues, isoform 2 is expressed in neural retina and testis, and at low level in brain, heart, kidney and liver. Isoform 1 displays a similar pattern of expression but is expressed at very low level in fetal cochlea.

The protein localises to the cell projection. It localises to the stereocilium membrane. Its subcellular location is the secreted. In terms of biological role, involved in hearing and vision as member of the USH2 complex. In the inner ear, required for the maintenance of the hair bundle ankle formation, which connects growing stereocilia in developing cochlear hair cells. In retina photoreceptors, the USH2 complex is required for the maintenance of periciliary membrane complex that seems to play a role in regulating intracellular protein transport. This Homo sapiens (Human) protein is Usherin (USH2A).